The sequence spans 79 residues: MDPKAFVSGMAALGAGIAALACIGAGIGTGNATGKAVEGVSRQPEASGKIMSTLVIGSAFSEATAIYGLIIALFLIFKI.

Helical transmembrane passes span 7–27 (VSGMAALGAGIAALACIGAGI) and 56–76 (IGSAFSEATAIYGLIIALFLI).

The protein belongs to the ATPase C chain family. As to quaternary structure, F-type ATPases have 2 components, F(1) - the catalytic core - and F(0) - the membrane proton channel. F(1) has five subunits: alpha(3), beta(3), gamma(1), delta(1), epsilon(1). F(0) has three main subunits: a(1), b(2) and c(10-14). The alpha and beta chains form an alternating ring which encloses part of the gamma chain. F(1) is attached to F(0) by a central stalk formed by the gamma and epsilon chains, while a peripheral stalk is formed by the delta and b chains.

It is found in the cell membrane. In terms of biological role, f(1)F(0) ATP synthase produces ATP from ADP in the presence of a proton or sodium gradient. F-type ATPases consist of two structural domains, F(1) containing the extramembraneous catalytic core and F(0) containing the membrane proton channel, linked together by a central stalk and a peripheral stalk. During catalysis, ATP synthesis in the catalytic domain of F(1) is coupled via a rotary mechanism of the central stalk subunits to proton translocation. Its function is as follows. Key component of the F(0) channel; it plays a direct role in translocation across the membrane. A homomeric c-ring of between 10-14 subunits forms the central stalk rotor element with the F(1) delta and epsilon subunits. This chain is ATP synthase subunit c, found in Clostridium botulinum (strain Hall / ATCC 3502 / NCTC 13319 / Type A).